The sequence spans 216 residues: Thiamine-phosphate synthase (216 aa).

4-amino-2-methyl-5-(diphosphooxymethyl)pyrimidine is bound by residues 39–43 (QLRRK) and Asn71. Residues Asp72 and Asp91 each contribute to the Mg(2+) site. Ser109 contacts 4-amino-2-methyl-5-(diphosphooxymethyl)pyrimidine. A 2-[(2R,5Z)-2-carboxy-4-methylthiazol-5(2H)-ylidene]ethyl phosphate-binding site is contributed by 136-138 (SPT). Lys139 contacts 4-amino-2-methyl-5-(diphosphooxymethyl)pyrimidine. 2-[(2R,5Z)-2-carboxy-4-methylthiazol-5(2H)-ylidene]ethyl phosphate is bound by residues Gly172 and 192–193 (IT).

The protein belongs to the thiamine-phosphate synthase family. It depends on Mg(2+) as a cofactor.

It catalyses the reaction 2-[(2R,5Z)-2-carboxy-4-methylthiazol-5(2H)-ylidene]ethyl phosphate + 4-amino-2-methyl-5-(diphosphooxymethyl)pyrimidine + 2 H(+) = thiamine phosphate + CO2 + diphosphate. It carries out the reaction 2-(2-carboxy-4-methylthiazol-5-yl)ethyl phosphate + 4-amino-2-methyl-5-(diphosphooxymethyl)pyrimidine + 2 H(+) = thiamine phosphate + CO2 + diphosphate. The catalysed reaction is 4-methyl-5-(2-phosphooxyethyl)-thiazole + 4-amino-2-methyl-5-(diphosphooxymethyl)pyrimidine + H(+) = thiamine phosphate + diphosphate. It functions in the pathway cofactor biosynthesis; thiamine diphosphate biosynthesis; thiamine phosphate from 4-amino-2-methyl-5-diphosphomethylpyrimidine and 4-methyl-5-(2-phosphoethyl)-thiazole: step 1/1. Functionally, condenses 4-methyl-5-(beta-hydroxyethyl)thiazole monophosphate (THZ-P) and 2-methyl-4-amino-5-hydroxymethyl pyrimidine pyrophosphate (HMP-PP) to form thiamine monophosphate (TMP). This Bordetella avium (strain 197N) protein is Thiamine-phosphate synthase.